Here is a 178-residue protein sequence, read N- to C-terminus: Caveolin-1 (178 aa).

Residue Ser-2 is modified to N-acetylserine. Position 2 is a phosphoserine (Ser-2). Residues 2-94 (SGGKYVDSEG…WKASFTTFTV (93 aa)) are required for homooligomerization. The Cytoplasmic portion of the chain corresponds to 2 to 104 (SGGKYVDSEG…TKYWFYRLLS (103 aa)). Lys-5 carries the post-translational modification N6-acetyllysine; alternate. Lys-5 participates in a covalent cross-link: Glycyl lysine isopeptide (Lys-Gly) (interchain with G-Cter in ubiquitin); alternate. A Phosphotyrosine modification is found at Tyr-6. Position 9 is a phosphoserine (Ser-9). Tyr-14 is subject to Phosphotyrosine; by ABL1. Phosphotyrosine is present on Tyr-25. Residues Lys-26 and Lys-30 each participate in a glycyl lysine isopeptide (Lys-Gly) (interchain with G-Cter in ubiquitin) cross-link. Ser-37 carries the phosphoserine modification. Residues Lys-39, Lys-47, and Lys-57 each participate in a glycyl lysine isopeptide (Lys-Gly) (interchain with G-Cter in ubiquitin) cross-link. Residues 82–94 (DGIWKASFTTFTV) form an interaction with CAVIN3 region. Residues 105 to 125 (ALFGIPMALIWGIYFAILSFL) constitute an intramembrane region (helical). At 126–178 (HIWAVVPCIKSFLIEIQCISRVYSIYIHTVCDPLFEAIGKIFSNVRIGLQKEI) the chain is on the cytoplasmic side. The tract at residues 131-142 (VPCIKSFLIEIQ) is interacts with SPRY1, SPRY2, SPRY3 and SPRY4. 3 S-palmitoyl cysteine lipidation sites follow: Cys-133, Cys-143, and Cys-156. Residues 149–160 (SIYIHTVCDPLF) form an interacts with SPRY1, SPRY2, and SPRY4 region. Positions 167–178 (FSNVRIGLQKEI) are interacts with SPRY1, SPRY2, SPRY3 and SPRY4.

Belongs to the caveolin family. In terms of assembly, homooligomer. Interacts with GLIPR2. Interacts with NOSTRIN. Interacts with SNAP25 and STX1A. Interacts (via the N-terminus) with DPP4; the interaction is direct. Interacts with CTNNB1, CDH1 and JUP. Interacts with PACSIN2; this interaction induces membrane tubulation. Interacts with SLC7A9. Interacts with BMX and BTK. Interacts with TGFBR1. Interacts with CAVIN3 (via leucine-zipper domain) in a cholesterol-sensitive manner. Interacts with CAVIN1. Interacts with EHD2 in a cholesterol-dependent manner. Forms a ternary complex with UBXN6 and VCP; mediates CAV1 targeting to lysosomes for degradation. Interacts with ABCG1; this interaction regulates ABCG1-mediated cholesterol efflux. Interacts with NEU3; this interaction enhances NEU3 sialidase activity within caveola. Interacts (via C-terminus) with SPRY1, SPRY2 (via C-terminus), SPRY3, and SPRY4. Interacts with IGFBP5; this interaction allows trafficking of IGFBP5 from the plasma membrane to the nucleus. Phosphorylated at Tyr-14 by ABL1 in response to oxidative stress. Post-translationally, ubiquitinated. Undergo monoubiquitination and multi- and/or polyubiquitination. Monoubiquitination of N-terminal lysines promotes integration in a ternary complex with UBXN6 and VCP which promotes oligomeric CAV1 targeting to lysosomes for degradation. Ubiquitinated by ZNRF1; leading to degradation and modulation of the TLR4-mediated immune response.

It is found in the golgi apparatus membrane. The protein localises to the cell membrane. The protein resides in the membrane. It localises to the caveola. Its subcellular location is the membrane raft. May act as a scaffolding protein within caveolar membranes. Forms a stable heterooligomeric complex with CAV2 that targets to lipid rafts and drives caveolae formation. Mediates the recruitment of CAVIN proteins (CAVIN1/2/3/4) to the caveolae. Interacts directly with G-protein alpha subunits and can functionally regulate their activity. Involved in the costimulatory signal essential for T-cell receptor (TCR)-mediated T-cell activation. Its binding to DPP4 induces T-cell proliferation and NF-kappa-B activation in a T-cell receptor/CD3-dependent manner. Recruits CTNNB1 to caveolar membranes and may regulate CTNNB1-mediated signaling through the Wnt pathway. Negatively regulates TGFB1-mediated activation of SMAD2/3 by mediating the internalization of TGFBR1 from membrane rafts leading to its subsequent degradation. Binds 20(S)-hydroxycholesterol (20(S)-OHC). The sequence is that of Caveolin-1 (CAV1) from Saimiri boliviensis boliviensis (Bolivian squirrel monkey).